A 131-amino-acid polypeptide reads, in one-letter code: Small ribosomal subunit protein uS8 (131 aa).

This sequence belongs to the universal ribosomal protein uS8 family. In terms of assembly, part of the 30S ribosomal subunit. Contacts proteins S5 and S12.

Its function is as follows. One of the primary rRNA binding proteins, it binds directly to 16S rRNA central domain where it helps coordinate assembly of the platform of the 30S subunit. This chain is Small ribosomal subunit protein uS8, found in Verminephrobacter eiseniae (strain EF01-2).